Consider the following 610-residue polypeptide: Zinc metalloproteinase-disintegrin-like bothropasin (610 aa).

Positions 1–20 are cleaved as a signal peptide; it reads MIEVLLVTICLAAFPYQGSS. The propeptide occupies 21–191; that stretch reads IILESGNVND…ASQLVVTAEQ (171 aa). At Q192 the chain carries Pyrrolidone carboxylic acid. Positions 198–394 constitute a Peptidase M12B domain; it reads RYVELFIVVD…ENPQCILNEP (197 aa). Positions 201 and 285 each coordinate Ca(2+). 3 disulfide bridges follow: C309–C389, C349–C373, and C351–C356. H334 contacts Zn(2+). The active site involves E335. Residues H338 and H344 each contribute to the Zn(2+) site. Residue N372 is glycosylated (N-linked (GlcNAc...) asparagine). Ca(2+) contacts are provided by C389, N392, V404, N407, L409, E411, E414, and D417. Residues 402 to 488 form the Disintegrin domain; the sequence is PPVCGNELLE…ECPADVFHKN (87 aa). Intrachain disulfides connect C405-C424, C405-C434, C416-C429, C416-C434, C418-C424, C428-C451, C442-C448, C447-C473, C460-C480, C467-C492, C467-C499, C492-C504, C499-C504, C511-C526, C511-C561, C526-C572, C539-C549, C549-C556, C556-C598, C561-C572, C592-C603, and C598-C603. Positions 466 to 468 match the D/ECD-tripeptide motif; it reads ECD. Ca(2+) contacts are provided by D468, P469, E471, D483, and V484.

The protein belongs to the venom metalloproteinase (M12B) family. P-III subfamily. P-IIIb sub-subfamily. As to quaternary structure, monomer. Zn(2+) serves as cofactor. In terms of tissue distribution, expressed by the venom gland.

It localises to the secreted. It catalyses the reaction Cleavage of 5-His-|-Leu-6, 10-His-|-Leu-11, 14-Ala-|-Leu-15, 16-Tyr-|-Leu-17 and 24-Phe-|-Phe-25 in insulin B chain.. Inhibited by EDTA and EGTA. In terms of biological role, has caseinolytic activity. Causes hemorrhage on rabbit skin and causes myonecrosis in mouse tibialis anterior muscle. Inhibits platelet aggregation. In Bothrops jararaca (Jararaca), this protein is Zinc metalloproteinase-disintegrin-like bothropasin.